The sequence spans 596 residues: DNA mismatch repair protein MutL (596 aa).

Belongs to the DNA mismatch repair MutL/HexB family.

Its function is as follows. This protein is involved in the repair of mismatches in DNA. It is required for dam-dependent methyl-directed DNA mismatch repair. May act as a 'molecular matchmaker', a protein that promotes the formation of a stable complex between two or more DNA-binding proteins in an ATP-dependent manner without itself being part of a final effector complex. This is DNA mismatch repair protein MutL from Leptospira borgpetersenii serovar Hardjo-bovis (strain JB197).